A 236-amino-acid polypeptide reads, in one-letter code: UPF0280 protein Mlab_0453 (236 aa).

Belongs to the UPF0280 family.

The protein is UPF0280 protein Mlab_0453 of Methanocorpusculum labreanum (strain ATCC 43576 / DSM 4855 / Z).